The primary structure comprises 656 residues: Macrolide export ATP-binding/permease protein MacB (656 aa).

Residues leucine 6 to alanine 244 form the ABC transporter domain. Glycine 42–serine 49 serves as a coordination point for ATP. 4 helical membrane-spanning segments follow: residues phenylalanine 277–glycine 297, leucine 531–isoleucine 551, leucine 586–phenylalanine 606, and serine 621–alanine 641.

This sequence belongs to the ABC transporter superfamily. Macrolide exporter (TC 3.A.1.122) family. Homodimer. Part of the tripartite efflux system MacAB-TolC, which is composed of an inner membrane transporter, MacB, a periplasmic membrane fusion protein, MacA, and an outer membrane component, TolC. The complex forms a large protein conduit and can translocate molecules across both the inner and outer membranes. Interacts with MacA.

It localises to the cell inner membrane. Functionally, part of the tripartite efflux system MacAB-TolC. MacB is a non-canonical ABC transporter that contains transmembrane domains (TMD), which form a pore in the inner membrane, and an ATP-binding domain (NBD), which is responsible for energy generation. Confers resistance against macrolides. This chain is Macrolide export ATP-binding/permease protein MacB, found in Shewanella sp. (strain ANA-3).